Consider the following 736-residue polypeptide: Epithelial splicing regulatory protein 2 (736 aa).

3 RRM domains span residues 224–301, 325–405, and 659–736; these read TVIR…KATG, MIIR…RSTA, and ALVR…ACCE.

It belongs to the ESRP family.

Its subcellular location is the nucleus. In terms of biological role, mRNA splicing factor that regulates the formation of epithelial cell-specific isoforms. Specifically regulates the expression of FGFR2-IIIb, an epithelial cell-specific isoform of fgfr2. Acts by directly binding specific sequences in mRNAs. Binds the GU-rich sequence motifs in the ISE/ISS-3, a cis-element regulatory region present in the mRNA of fgfr2. This Danio rerio (Zebrafish) protein is Epithelial splicing regulatory protein 2 (esrp2).